Reading from the N-terminus, the 194-residue chain is 3-isopropylmalate dehydratase small subunit (194 aa).

The protein belongs to the LeuD family. LeuD type 1 subfamily. Heterodimer of LeuC and LeuD.

It carries out the reaction (2R,3S)-3-isopropylmalate = (2S)-2-isopropylmalate. It participates in amino-acid biosynthesis; L-leucine biosynthesis; L-leucine from 3-methyl-2-oxobutanoate: step 2/4. Catalyzes the isomerization between 2-isopropylmalate and 3-isopropylmalate, via the formation of 2-isopropylmaleate. This is 3-isopropylmalate dehydratase small subunit from Bacillus cereus (strain ATCC 14579 / DSM 31 / CCUG 7414 / JCM 2152 / NBRC 15305 / NCIMB 9373 / NCTC 2599 / NRRL B-3711).